The following is a 511-amino-acid chain: MQLNPSEISELIKSRIQGLGDTAEIRNQGTVISVSDGICRIHGLSDVMQGEMLEFPGNTFGLALNLERDSVGAVILGEYEHISEGDTVKCTGRILEVPIGPELCGRVVNALGQPIDGKGPINTKLTTPIEKIAPGVIARQSVDQPMQTGIKAIDAMVPIGRGQRELIIGDRQTGKTAVAIDAIINQKGQGVTCIYVAIGQKASSIKNIVRALEQHGAMEYTIVVAATASESAAMQFVSAYSGCAMGEYFRDRGEDALIVYDDLSKQAVAYRQVSLLLRRPPGREAFPGDVFYLHSRLLERAARVNADYVEAFTKGAVKGKTGSLTALPIIETQAGDVSAFVPTNVISITDGQIFLETSLFNSGVRPAINAGISVSRVGGAAQTKVIKGLSGGIRTDLAQYRELAAFAQFASDLDASTRKQLDRGARVTELLKQAQYAPLSTSLMAVSLFAVNKGYFDDLEVKQVLAFESGLHGFMKSSHAALLQKIEDTKKLEKDDEAVLAAAIADFKKSF.

169 to 176 (GDRQTGKT) contributes to the ATP binding site.

It belongs to the ATPase alpha/beta chains family. As to quaternary structure, F-type ATPases have 2 components, CF(1) - the catalytic core - and CF(0) - the membrane proton channel. CF(1) has five subunits: alpha(3), beta(3), gamma(1), delta(1), epsilon(1). CF(0) has three main subunits: a(1), b(2) and c(9-12). The alpha and beta chains form an alternating ring which encloses part of the gamma chain. CF(1) is attached to CF(0) by a central stalk formed by the gamma and epsilon chains, while a peripheral stalk is formed by the delta and b chains.

Its subcellular location is the cell inner membrane. The enzyme catalyses ATP + H2O + 4 H(+)(in) = ADP + phosphate + 5 H(+)(out). Functionally, produces ATP from ADP in the presence of a proton gradient across the membrane. The alpha chain is a regulatory subunit. In Janthinobacterium sp. (strain Marseille) (Minibacterium massiliensis), this protein is ATP synthase subunit alpha.